The following is a 153-amino-acid chain: Allergen Pet c 1 (153 aa).

It belongs to the BetVI family. In terms of assembly, may form dimers.

This chain is Allergen Pet c 1, found in Petroselinum crispum (Parsley).